A 302-amino-acid polypeptide reads, in one-letter code: MAGRSLSHLQQLEAESIQIIREVAAEFGNPVMMYSIGKDSSVMLHLARKAFYPGKIPFPLLHVDTGWKFKEMIAFRDAQAKAFGFELLTHTNQEGVEQGVGPFTHGSAKHTDIMKTQGLKQALNKYGFDAAFGGARRDEEKSRAKERVYSFRDKHHRWDPKNQRPELWRTYNGAVNKGESIRVFPLSNWTELDIWQYIYQENIEIVPLYFAAPRAVVNKGGQLIMKDDDRMPLEEGDVESVERVRFRTLGCYPLTAAMPSEADTLEKIIEEMLLTRSSERQGRLIDSDQSASMEQKKRQGYF.

The disordered stretch occupies residues 280–302 (RQGRLIDSDQSASMEQKKRQGYF).

Belongs to the PAPS reductase family. CysD subfamily. As to quaternary structure, heterodimer composed of CysD, the smaller subunit, and CysN.

The enzyme catalyses sulfate + ATP + H(+) = adenosine 5'-phosphosulfate + diphosphate. It functions in the pathway sulfur metabolism; hydrogen sulfide biosynthesis; sulfite from sulfate: step 1/3. Its function is as follows. With CysN forms the ATP sulfurylase (ATPS) that catalyzes the adenylation of sulfate producing adenosine 5'-phosphosulfate (APS) and diphosphate, the first enzymatic step in sulfur assimilation pathway. APS synthesis involves the formation of a high-energy phosphoric-sulfuric acid anhydride bond driven by GTP hydrolysis by CysN coupled to ATP hydrolysis by CysD. This chain is Sulfate adenylyltransferase subunit 2, found in Shewanella frigidimarina (strain NCIMB 400).